Reading from the N-terminus, the 79-residue chain is U-actitoxin-Oulsp1 (79 aa).

Residues 1-21 (MNTKLVVVFLLSAILFVSVTA) form the signal peptide. Positions 22–43 (SRPGKDLERDEAYETYDDENKR) are excised as a propeptide. The 35-residue stretch at 45–79 (CKDVFPAATCRHAKSVGNCSSEKYKRNCAITCGAC) folds into the ShKT domain. 3 disulfides stabilise this stretch: Cys45-Cys79, Cys54-Cys72, and Cys63-Cys76. Positions 67–68 (KY) are crucial for binding to potassium channels.

The protein belongs to the sea anemone type 1 potassium channel toxin family. Type 1b subfamily. Two similar peptides (OspTx2a-p1 and -p2) are obtained after synthesis and oxidative folding. They may differ by a D-Cys at position 76 (corresponding to OspTx2a-p2). Since C-terminal Cys residues are prone to racemization during solid-phase peptide synthesis, and if the presence of a D-amino acid is correct, it is probable that OspTx2a-p1 (L-Cys-76 form) corresponds to the native peptide.

Its subcellular location is the secreted. In terms of biological role, toxin that weakly blocks the two voltage-gated potassium channels on Kv1.2/KCNA2 (IC(50)=1.8-2.5 uM) and Kv1.6/KCNA6 (IC(50)=5.6-6.2 uM). The chain is U-actitoxin-Oulsp1 from Oulactis sp. (Sea anemone).